The primary structure comprises 974 residues: Isoleucine--tRNA ligase (974 aa).

Positions 69–79 (PYANGALHMGH) match the 'HIGH' region motif. Glu585 is an L-isoleucyl-5'-AMP binding site. Positions 626–630 (KMSKS) match the 'KMSKS' region motif. An ATP-binding site is contributed by Lys629. Residues Cys939, Cys942, Cys959, and Cys962 each contribute to the Zn(2+) site.

This sequence belongs to the class-I aminoacyl-tRNA synthetase family. IleS type 1 subfamily. Monomer. Zn(2+) serves as cofactor.

It localises to the cytoplasm. The enzyme catalyses tRNA(Ile) + L-isoleucine + ATP = L-isoleucyl-tRNA(Ile) + AMP + diphosphate. Its function is as follows. Catalyzes the attachment of isoleucine to tRNA(Ile). As IleRS can inadvertently accommodate and process structurally similar amino acids such as valine, to avoid such errors it has two additional distinct tRNA(Ile)-dependent editing activities. One activity is designated as 'pretransfer' editing and involves the hydrolysis of activated Val-AMP. The other activity is designated 'posttransfer' editing and involves deacylation of mischarged Val-tRNA(Ile). This is Isoleucine--tRNA ligase from Parasynechococcus marenigrum (strain WH8102).